The primary structure comprises 148 residues: Deoxyuridine 5'-triphosphate nucleotidohydrolase (148 aa).

Substrate contacts are provided by residues 68–70 (RSG), Asn81, 85–87 (TID), and Lys95.

Belongs to the dUTPase family. Mg(2+) serves as cofactor.

The catalysed reaction is dUTP + H2O = dUMP + diphosphate + H(+). The protein operates within pyrimidine metabolism; dUMP biosynthesis; dUMP from dCTP (dUTP route): step 2/2. In terms of biological role, this enzyme is involved in nucleotide metabolism: it produces dUMP, the immediate precursor of thymidine nucleotides and it decreases the intracellular concentration of dUTP so that uracil cannot be incorporated into DNA. The protein is Deoxyuridine 5'-triphosphate nucleotidohydrolase of Rickettsia conorii (strain ATCC VR-613 / Malish 7).